Here is a 146-residue protein sequence, read N- to C-terminus: Large ribosomal subunit protein uL11 (146 aa).

The protein belongs to the universal ribosomal protein uL11 family. In terms of assembly, part of the ribosomal stalk of the 50S ribosomal subunit. Interacts with L10 and the large rRNA to form the base of the stalk. L10 forms an elongated spine to which L12 dimers bind in a sequential fashion forming a multimeric L10(L12)X complex. Post-translationally, one or more lysine residues are methylated.

In terms of biological role, forms part of the ribosomal stalk which helps the ribosome interact with GTP-bound translation factors. This Salinibacter ruber (strain DSM 13855 / M31) protein is Large ribosomal subunit protein uL11.